Here is a 526-residue protein sequence, read N- to C-terminus: Cytochrome P450 4F5 (526 aa).

Cys-470 provides a ligand contact to heme.

The protein belongs to the cytochrome P450 family. It depends on heme as a cofactor. High expression in liver and kidney. Lower expression in brain.

Its subcellular location is the endoplasmic reticulum membrane. It localises to the microsome membrane. It carries out the reaction an organic molecule + reduced [NADPH--hemoprotein reductase] + O2 = an alcohol + oxidized [NADPH--hemoprotein reductase] + H2O + H(+). The sequence is that of Cytochrome P450 4F5 (Cyp4f5) from Rattus norvegicus (Rat).